The following is a 392-amino-acid chain: N-acetylneuraminate epimerase (392 aa).

An N-terminal signal peptide occupies residues 1-35 (MTQLYPQYKKQLTTKIVLFSALSLLMMASLPNTYA). Kelch repeat units follow at residues 56–100 (SLYV…VVLA), 102–155 (KLYV…TTLD), 157–192 (SQAV…AVIN), 193–238 (AYFN…SRMD), 241–290 (LILI…LAGA), 312–361 (KQFN…QGPD), and 363–392 (VILI…LHIE). The active-site Proton acceptor is the glutamate 247.

It belongs to the NanM family. As to quaternary structure, homodimer.

It localises to the periplasm. The catalysed reaction is N-acetyl-alpha-neuraminate = N-acetyl-beta-neuraminate. Functionally, converts alpha-N-acetylneuranimic acid (Neu5Ac) to the beta-anomer, accelerating the equilibrium between the alpha- and beta-anomers. Probably facilitates sialidase-negative bacteria to compete successfully for limited amounts of extracellular Neu5Ac, which is likely taken up in the beta-anomer. In addition, the rapid removal of sialic acid from solution might be advantageous to the bacterium to damp down host responses. This Yersinia pseudotuberculosis serotype O:1b (strain IP 31758) protein is N-acetylneuraminate epimerase.